Reading from the N-terminus, the 66-residue chain is Large ribosomal subunit protein bL35 (66 aa).

It belongs to the bacterial ribosomal protein bL35 family.

This is Large ribosomal subunit protein bL35 from Synechococcus sp. (strain ATCC 27144 / PCC 6301 / SAUG 1402/1) (Anacystis nidulans).